The following is a 682-amino-acid chain: DNA-directed RNA polymerase subunit beta' (682 aa).

Cys69, Cys71, Cys87, and Cys90 together coordinate Zn(2+). Mg(2+)-binding residues include Asp489, Asp491, and Asp493.

The protein belongs to the RNA polymerase beta' chain family. RpoC1 subfamily. In terms of assembly, in plastids the minimal PEP RNA polymerase catalytic core is composed of four subunits: alpha, beta, beta', and beta''. When a (nuclear-encoded) sigma factor is associated with the core the holoenzyme is formed, which can initiate transcription. Mg(2+) is required as a cofactor. Requires Zn(2+) as cofactor.

It localises to the plastid. The protein localises to the chloroplast. The catalysed reaction is RNA(n) + a ribonucleoside 5'-triphosphate = RNA(n+1) + diphosphate. DNA-dependent RNA polymerase catalyzes the transcription of DNA into RNA using the four ribonucleoside triphosphates as substrates. The chain is DNA-directed RNA polymerase subunit beta' from Oryza nivara (Indian wild rice).